The following is an 871-amino-acid chain: Tegument protein UL47 homolog (871 aa).

The segment at 1 to 212 is disordered; it reads MDQHHGARGG…DEDDMEVIRD (212 aa). Residues 13 to 33 carry the Nuclear localization signal motif; sequence IRRPRRSIESRSHPFRATGNT. Polar residues-rich tracts occupy residues 30–41 and 59–81; these read TGNTQRTYSTPR and EQAS…STSF. Composition is skewed to acidic residues over residues 114-134, 146-155, and 185-207; these read SSSE…EEDQ, SSDENDEEED, and SESE…EDDM.

This sequence belongs to the alphaherpesvirinae HHV-1 UL47 family. As to quaternary structure, interacts with US3 kinase. Interacts with UL31 and UL34; these interactions seem important for efficient virion nuclear egress. Interacts with UL41/VHS. Phosphorylated by US3. This phosphorylation is required for proper nuclear localization.

The protein resides in the virion tegument. It is found in the host nucleus. It localises to the host cytoplasm. In terms of biological role, tegument protein that can bind to various RNA transcripts. Plays a role in the attenuation of selective viral and cellular mRNA degradation by modulating the activity of host shutoff RNase UL41/VHS. Also plays a role in the primary envelopment of virions in the perinuclear space, probably by interacting with two nuclear egress proteins UL31 and UL34. This chain is Tegument protein UL47 homolog, found in Equine herpesvirus 1 (strain V592) (EHV-1).